The chain runs to 48 residues: uncharacterized protein (48 aa).

A helical transmembrane segment spans residues 21 to 43 (SIFVSLGVFAVSVAILKSRLGNF).

Its subcellular location is the membrane. This is an uncharacterized protein from Schizosaccharomyces pombe (strain 972 / ATCC 24843) (Fission yeast).